Here is a 66-residue protein sequence, read N- to C-terminus: Large ribosomal subunit protein uL29 (66 aa).

It belongs to the universal ribosomal protein uL29 family.

This is Large ribosomal subunit protein uL29 from Fervidobacterium nodosum (strain ATCC 35602 / DSM 5306 / Rt17-B1).